The chain runs to 254 residues: Translation initiation factor 2 subunit alpha (254 aa).

The 72-residue stretch at 10–81 folds into the S1 motif domain; that stretch reads GDLVVVKITE…ERKVVDLSLK (72 aa).

Belongs to the eIF-2-alpha family. In terms of assembly, heterotrimer composed of an alpha, a beta and a gamma chain.

In terms of biological role, eIF-2 functions in the early steps of protein synthesis by forming a ternary complex with GTP and initiator tRNA. The chain is Translation initiation factor 2 subunit alpha from Thermoplasma acidophilum (strain ATCC 25905 / DSM 1728 / JCM 9062 / NBRC 15155 / AMRC-C165).